A 187-amino-acid polypeptide reads, in one-letter code: Adenylate kinase (187 aa).

G11–T16 serves as a coordination point for ATP. The segment at S31 to V60 is NMP. AMP-binding positions include T32, R37, D58–V60, G86–R89, and Q93. Residues G127 to D137 are LID. R128 serves as a coordination point for ATP. R134 and R145 together coordinate AMP. Residue G173 participates in ATP binding.

The protein belongs to the adenylate kinase family. As to quaternary structure, monomer.

It is found in the cytoplasm. The catalysed reaction is AMP + ATP = 2 ADP. It functions in the pathway purine metabolism; AMP biosynthesis via salvage pathway; AMP from ADP: step 1/1. Catalyzes the reversible transfer of the terminal phosphate group between ATP and AMP. Plays an important role in cellular energy homeostasis and in adenine nucleotide metabolism. In Leptospira borgpetersenii serovar Hardjo-bovis (strain JB197), this protein is Adenylate kinase.